The following is a 117-amino-acid chain: Large ribosomal subunit protein bL19 (117 aa).

This sequence belongs to the bacterial ribosomal protein bL19 family.

In terms of biological role, this protein is located at the 30S-50S ribosomal subunit interface and may play a role in the structure and function of the aminoacyl-tRNA binding site. This chain is Large ribosomal subunit protein bL19, found in Thermotoga neapolitana (strain ATCC 49049 / DSM 4359 / NBRC 107923 / NS-E).